A 1232-amino-acid polypeptide reads, in one-letter code: Pyruvate:ferredoxin oxidoreductase (1232 aa).

Residue T31 coordinates pyruvate. E64 lines the thiamine diphosphate pocket. Residue R114 coordinates pyruvate. Residues 427 to 431 (ADGTV), K459, N560, and N602 each bind CoA. 2 consecutive 4Fe-4S ferredoxin-type domains span residues 680–709 (NVPQ…PVLA) and 736–767 (FRIQ…MQPL). [4Fe-4S] cluster-binding residues include C689, C692, C695, C699, C745, C748, C751, C755, C812, and C815. Thiamine diphosphate is bound by residues E817, C840, and 962-965 (GDGW). Residue C840 coordinates [4Fe-4S] cluster. D963 lines the Mg(2+) pocket. The Ca(2+) site is built by D983 and N985. Mg(2+) contacts are provided by T991 and V993. Residue 991-996 (TEVYSN) participates in thiamine diphosphate binding. Ca(2+) is bound by residues A1056, F1059, G1061, and S1063. Position 1071 (C1071) interacts with [4Fe-4S] cluster. A disulfide bond links C1195 and C1212. The interval 1197–1232 (RDDTPMMARPDSGEACDQNRAGTSEQQGDLSKRTKK) is disordered. Polar residues predominate over residues 1216–1225 (RAGTSEQQGD).

This sequence belongs to the pyruvate:ferredoxin/flavodoxin oxidoreductase family. Homodimer. [4Fe-4S] cluster serves as cofactor. It depends on thiamine diphosphate as a cofactor. Requires Mg(2+) as cofactor.

The protein localises to the cytoplasm. It catalyses the reaction 2 oxidized [2Fe-2S]-[ferredoxin] + pyruvate + CoA = 2 reduced [2Fe-2S]-[ferredoxin] + acetyl-CoA + CO2 + H(+). Functionally, catalyzes the ferredoxin-dependent oxidative decarboxylation of pyruvate. Required for the transfer of electrons from pyruvate to ferredoxin. Ferredoxin I and ferredoxin II, which are single 4Fe-4S cluster ferredoxins are the most effective electron carriers of POR. The polypeptide is Pyruvate:ferredoxin oxidoreductase (Desulfocurvibacter africanus (Desulfovibrio africanus)).